The sequence spans 24 residues: Brevinin-1Bf (24 aa).

Cys18 and Cys24 form a disulfide bridge.

Expressed by the skin glands.

The protein localises to the secreted. Functionally, antibacterial activity against Gram-positive bacterium S.aureus and Gram-negative bacterium E.coli. In Lithobates berlandieri (Rio Grande leopard frog), this protein is Brevinin-1Bf.